A 244-amino-acid chain; its full sequence is Ribonuclease PH (244 aa).

Phosphate contacts are provided by residues arginine 90 and 128 to 130; that span reads GTR.

The protein belongs to the RNase PH family. In terms of assembly, homohexameric ring arranged as a trimer of dimers.

It carries out the reaction tRNA(n+1) + phosphate = tRNA(n) + a ribonucleoside 5'-diphosphate. Its function is as follows. Phosphorolytic 3'-5' exoribonuclease that plays an important role in tRNA 3'-end maturation. Removes nucleotide residues following the 3'-CCA terminus of tRNAs; can also add nucleotides to the ends of RNA molecules by using nucleoside diphosphates as substrates, but this may not be physiologically important. Probably plays a role in initiation of 16S rRNA degradation (leading to ribosome degradation) during starvation. This chain is Ribonuclease PH, found in Cutibacterium acnes (strain DSM 16379 / KPA171202) (Propionibacterium acnes).